Consider the following 231-residue polypeptide: uncharacterized protein (231 aa).

Transmembrane regions (helical) follow at residues 6–26, 39–59, and 66–86; these read IKLIFIVCSTVIVTGVLYKYI, NIVSFYALLLLLFSIIYSTFS, and FCFQLAMWAVIFLVIITGYAF.

The protein resides in the cell membrane. This is an uncharacterized protein from Rickettsia prowazekii (strain Madrid E).